The sequence spans 499 residues: Protein SENSITIVE TO PROTON RHIZOTOXICITY 1 (499 aa).

Residues 1–31 (METEDDLCNTNWGSSSSKSREPGSSDCGNST) are disordered. Residues 244-266 (HFCTICGKGFKRDANLRMHMRGH) form a C2H2-type 1 zinc finger. The C2H2-type 2; atypical zinc finger occupies 354–385 (KHCGKNKWLCSCGTTFSRKDKLFGHIALFQGH). The tract at residues 390 to 436 (PLEETKPSASTSTQRGSSEGGNNNQGMVGFNLGSASNANQETTQPGM) is disordered. Polar residues-rich tracts occupy residues 396–415 (PSASTSTQRGSSEGGNNNQG) and 422–435 (GSASNANQETTQPG).

Expressed in roots (e.g. root tips and lateral roots), leaves, flowers (e.g. stigma, sepal, anther, and filament), stems, siliques and cotyledons.

The protein resides in the nucleus. Its function is as follows. Probable transcription factor. Together with STOP2, plays a critical role in tolerance to major stress factors in acid soils such as proton H(+) and aluminum ion Al(3+). Required for the expression of genes in response to acidic stress (e.g. ALMT1 and MATE), and Al-activated citrate exudation. The polypeptide is Protein SENSITIVE TO PROTON RHIZOTOXICITY 1 (Arabidopsis thaliana (Mouse-ear cress)).